Reading from the N-terminus, the 89-residue chain is Large ribosomal subunit protein bL31B (89 aa).

It belongs to the bacterial ribosomal protein bL31 family. Type B subfamily. As to quaternary structure, part of the 50S ribosomal subunit.

This chain is Large ribosomal subunit protein bL31B, found in Haemophilus ducreyi (strain 35000HP / ATCC 700724).